Reading from the N-terminus, the 159-residue chain is Ribosomal RNA large subunit methyltransferase H (159 aa).

S-adenosyl-L-methionine-binding positions include L76, G107, and 126 to 131 (LSSLTL).

The protein belongs to the RNA methyltransferase RlmH family. As to quaternary structure, homodimer.

The protein resides in the cytoplasm. The catalysed reaction is pseudouridine(1915) in 23S rRNA + S-adenosyl-L-methionine = N(3)-methylpseudouridine(1915) in 23S rRNA + S-adenosyl-L-homocysteine + H(+). Specifically methylates the pseudouridine at position 1915 (m3Psi1915) in 23S rRNA. This is Ribosomal RNA large subunit methyltransferase H from Cupriavidus necator (strain ATCC 17699 / DSM 428 / KCTC 22496 / NCIMB 10442 / H16 / Stanier 337) (Ralstonia eutropha).